A 258-amino-acid polypeptide reads, in one-letter code: Isoprenyl transferase (258 aa).

Aspartate 38 is an active-site residue. Aspartate 38 contacts Mg(2+). Residues 39–42 (GNGR), tryptophan 43, arginine 51, histidine 55, and 83–85 (STE) each bind substrate. Residue asparagine 86 is the Proton acceptor of the active site. Substrate-binding positions include tryptophan 87, arginine 89, arginine 206, and 212–214 (RIS). Position 225 (glutamate 225) interacts with Mg(2+).

The protein belongs to the UPP synthase family. In terms of assembly, homodimer. It depends on Mg(2+) as a cofactor.

Its function is as follows. Catalyzes the condensation of isopentenyl diphosphate (IPP) with allylic pyrophosphates generating different type of terpenoids. The sequence is that of Isoprenyl transferase from Bacillus anthracis.